The chain runs to 616 residues: Spastin (616 aa).

A disordered region spans residues 1–44; it reads MNSPGGRGKKKGSGGPSSPVPPRPPPPCLASSRPAPRPAPPPQS. Residues 1–50 form a required for nuclear localization region; that stretch reads MNSPGGRGKKKGSGGPSSPVPPRPPPPCLASSRPAPRPAPPPQSPHKRNL. Topologically, residues 1–56 are cytoplasmic; the sequence is MNSPGGRGKKKGSGGPSSPVPPRPPPPCLASSRPAPRPAPPPQSPHKRNLYYFSYP. A required for interaction with ATL1 region spans residues 1 to 80; it reads MNSPGGRGKK…LGLLFVWLCQ (80 aa). The required for midbody localization stretch occupies residues 1-194; the sequence is MNSPGGRGKK…LVMAKDRLQL (194 aa). The tract at residues 1-300 is required for interaction with RTN1; the sequence is MNSPGGRGKK…STPKTNRTNK (300 aa). The Nuclear localization signal motif lies at 4 to 11; sequence PGGRGKKK. 2 stretches are compositionally biased toward pro residues: residues 18 to 28 and 35 to 44; these read SPVPPRPPPPC and APRPAPPPQS. Positions 50–87 are required for interaction with SSNA1 and microtubules; it reads LYYFSYPLFLGFALLRLVAFHLGLLFVWLCQRFSRALM. Residues 57–77 constitute an intramembrane region (helical); it reads LFLGFALLRLVAFHLGLLFVW. The short motif at 59 to 67 is the Nuclear export signal element; the sequence is LGFALLRLV. Topologically, residues 78–616 are cytoplasmic; sequence LCQRFSRALM…WNKDFGDTTV (539 aa). The segment at 112–196 is sufficient for interaction with CHMP1B; that stretch reads EVERVRAFHK…MAKDRLQLLE (85 aa). The interval 114 to 200 is required for interaction with microtubules; that stretch reads ERVRAFHKQA…RLQLLEKLQP (87 aa). In terms of domain architecture, MIT spans 120-195; sequence HKQAFEYISV…VMAKDRLQLL (76 aa). The interval 223–266 is disordered; that stretch reads GHLQSESGAVPKRKDPLTHPSNSLPRSKAIMKTGSTGLSGHHRA. Positions 226–328 are sufficient for interaction with microtubules; the sequence is QSESGAVPKR…NVDSNLANFI (103 aa). Residues 228-616 are sufficient for microtubule severing; the sequence is ESGAVPKRKD…WNKDFGDTTV (389 aa). A phosphoserine mark is found at S245 and S268. A required for interaction with microtubules and microtubule severing region spans residues 270 to 328; it reads SGLSIVSGMRQGPGPTTATHKSTPKTNRTNKPSTPTTAPRKKKDLKNFRNVDSNLANFI. The segment at 278–311 is disordered; that stretch reads MRQGPGPTTATHKSTPKTNRTNKPSTPTTAPRKK. The segment covering 283-306 has biased composition (polar residues); it reads GPTTATHKSTPKTNRTNKPSTPTT. T306 is modified (phosphothreonine). The Nuclear localization signal signature appears at 309–312; that stretch reads RKKK. The required for interaction with microtubules stretch occupies residues 310–312; the sequence is KKK. 382–389 contacts ATP; the sequence is GPPGNGKT. The residue at position 597 (S597) is a Phosphoserine.

Belongs to the AAA ATPase family. Spastin subfamily. In terms of assembly, homohexamer. Mostly monomeric, but assembles into hexameric structure for short periods of time. Oligomerization seems to be a prerequisite for catalytic activity. Binding to ATP in a cleft between two adjacent subunits stabilizes the homohexameric form. Binds to microtubules at least in part via the alpha-tubulin and beta-tubulin tails. The hexamer adopts a ring conformation through which microtubules pass prior to being severed. Does not interact strongly with tubulin heterodimers. Interacts (via MIT domain) with CHMP1B; the interaction is direct. Interacts with SSNA1. Interacts with ATL1. Interacts with RTN1. Interacts with ZFYVE27. Interacts with REEP1. Interacts (via MIT domain) with IST1.

It is found in the membrane. It localises to the endoplasmic reticulum. Its subcellular location is the midbody. The protein localises to the cytoplasm. The protein resides in the cytoskeleton. It is found in the microtubule organizing center. It localises to the centrosome. Its subcellular location is the perinuclear region. The protein localises to the nucleus. The protein resides in the spindle. It is found in the cell projection. It localises to the axon. The catalysed reaction is n ATP + n H2O + a microtubule = n ADP + n phosphate + (n+1) alpha/beta tubulin heterodimers.. Allosteric enzyme with a cooperative mechanism; at least two neighbor subunits influence each other strongly in spastin hexamers. Microtubule binding promotes cooperative interactions among spastin subunits. ATP-dependent microtubule severing protein that specifically recognizes and cuts microtubules that are polyglutamylated. Preferentially recognizes and acts on microtubules decorated with short polyglutamate tails: severing activity increases as the number of glutamates per tubulin rises from one to eight, but decreases beyond this glutamylation threshold. Severing activity is not dependent on tubulin acetylation or detyrosination. Microtubule severing promotes reorganization of cellular microtubule arrays and the release of microtubules from the centrosome following nucleation. It is critical for the biogenesis and maintenance of complex microtubule arrays in axons, spindles and cilia. SPAST is involved in abscission step of cytokinesis and nuclear envelope reassembly during anaphase in cooperation with the ESCRT-III complex. Recruited at the midbody, probably by IST1, and participates in membrane fission during abscission together with the ESCRT-III complex. Recruited to the nuclear membrane by IST1 and mediates microtubule severing, promoting nuclear envelope sealing and mitotic spindle disassembly during late anaphase. Required for membrane traffic from the endoplasmic reticulum (ER) to the Golgi and endosome recycling. Recruited by IST1 to endosomes and regulates early endosomal tubulation and recycling by mediating microtubule severing. Probably plays a role in axon growth and the formation of axonal branches. In Sus scrofa (Pig), this protein is Spastin.